A 417-amino-acid chain; its full sequence is Serine hydroxymethyltransferase (417 aa).

Residues Leu112 and 116–118 each bind (6S)-5,6,7,8-tetrahydrofolate; that span reads GHL. Lys221 is modified (N6-(pyridoxal phosphate)lysine). Glu247 lines the (6S)-5,6,7,8-tetrahydrofolate pocket.

It belongs to the SHMT family. Homodimer. Pyridoxal 5'-phosphate is required as a cofactor.

Its subcellular location is the cytoplasm. It catalyses the reaction (6R)-5,10-methylene-5,6,7,8-tetrahydrofolate + glycine + H2O = (6S)-5,6,7,8-tetrahydrofolate + L-serine. The protein operates within one-carbon metabolism; tetrahydrofolate interconversion. It participates in amino-acid biosynthesis; glycine biosynthesis; glycine from L-serine: step 1/1. In terms of biological role, catalyzes the reversible interconversion of serine and glycine with tetrahydrofolate (THF) serving as the one-carbon carrier. This reaction serves as the major source of one-carbon groups required for the biosynthesis of purines, thymidylate, methionine, and other important biomolecules. Also exhibits THF-independent aldolase activity toward beta-hydroxyamino acids, producing glycine and aldehydes, via a retro-aldol mechanism. The protein is Serine hydroxymethyltransferase of Borrelia turicatae (strain 91E135).